A 304-amino-acid polypeptide reads, in one-letter code: Mas-related G-protein coupled receptor member A (304 aa).

At 1-17 the chain is on the extracellular side; the sequence is MDKTIPGSFNSRTLIPN. The chain crosses the membrane as a helical span at residues 18 to 38; that stretch reads LLIIISGLVGLIGNAMVFWLL. Residues 39-46 are Cytoplasmic-facing; sequence GFRLARNA. A helical transmembrane segment spans residues 47–67; that stretch reads FSVYILNLALADFLFLLCHII. At 68–80 the chain is on the extracellular side; the sequence is DSTLLLLKFSYPN. A helical transmembrane segment spans residues 81-101; sequence IIFLPCFNTVMMVPYIAGLSM. Topologically, residues 102–132 are cytoplasmic; that stretch reads LSAISTERCLSVVCPIWYRCRRPKHTSTVMC. A helical transmembrane segment spans residues 133–153; it reads SAIWVLSLLICILNRYFCGFL. Residues 154–167 lie on the Extracellular side of the membrane; sequence DTKYEKDNRCLASN. A helical membrane pass occupies residues 168-188; sequence FFTAACLIFLFVVLCLSSLAL. At 189 to 211 the chain is on the cytoplasmic side; that stretch reads LVRLFCGAGRMKLTRLYATIMLT. A helical transmembrane segment spans residues 212–232; that stretch reads VLVFLLCGLPFGIHWFLLIWI. Topologically, residues 233–244 are extracellular; the sequence is KIDYGKFAYGLY. The chain crosses the membrane as a helical span at residues 245–265; it reads LAALVLTAVNSCANPIIYFFV. The Cytoplasmic segment spans residues 266–304; the sequence is GSFRHQKHQTLKMVLQRALQDTPETAENTVEMSSSKVEP.

The protein belongs to the G-protein coupled receptor 1 family. Mas subfamily. In terms of tissue distribution, expressed in a subset of IB4-positive small diameter nociceptive dorsal root neurons.

The protein resides in the cell membrane. Functionally, orphan receptor activated by a subset of RFamide-family neuropeptides such as FLRF-amide and FMRF-amide. Mediates its action by association with G proteins that activate a phosphatidylinositol-calcium second messenger system. Its effect is mediated by G(q) and G(11) proteins. May regulate the function of nociceptive neurons by modulation of pain perception. In Rattus norvegicus (Rat), this protein is Mas-related G-protein coupled receptor member A (Mrgpra).